We begin with the raw amino-acid sequence, 321 residues long: Cytochrome c biogenesis protein CcsA (321 aa).

Helical transmembrane passes span 9-29 (ILTHISFSTISIVITIHLITL), 44-64 (GMIATFFCITGFLVSRWASSG), 68-88 (LSNLYESLIFLSWALYILHMI), 143-163 (MLLSYATLLCGSLLSAALLMI), 226-246 (VISLGFTLLTIGILCGAVWAN), 260-274 (TWAFITWTIFAIYLH), and 289-309 (VASIGFLIIWICYFGINLLGI).

It belongs to the CcmF/CycK/Ccl1/NrfE/CcsA family. As to quaternary structure, may interact with Ccs1.

It localises to the plastid. Its subcellular location is the chloroplast thylakoid membrane. Functionally, required during biogenesis of c-type cytochromes (cytochrome c6 and cytochrome f) at the step of heme attachment. The protein is Cytochrome c biogenesis protein CcsA of Oryza sativa subsp. indica (Rice).